Here is a 111-residue protein sequence, read N- to C-terminus: Ig kappa chain V-III region PC 7940 (111 aa).

Positions Asp1–Cys23 are framework-1. Cys23 and Cys92 form a disulfide bridge. Residues Arg24–His38 form a complementarity-determining-1 region. Residues Trp39 to Tyr53 are framework-2. The complementarity-determining-2 stretch occupies residues Leu54 to Ser60. The segment at Gly61–Cys92 is framework-3. A complementarity-determining-3 region spans residues Gln93–Thr101. Positions Phe102 to Lys111 are framework-4.

This Mus musculus (Mouse) protein is Ig kappa chain V-III region PC 7940.